Reading from the N-terminus, the 636-residue chain is Chaperone protein HtpG (636 aa).

An a; substrate-binding region spans residues 1–344 (MTMSVETQKE…SNDLSLNVSR (344 aa)). Positions 345–561 (EILQKDPIID…EQDLGMQMRQ (217 aa)) are b. The tract at residues 562-636 (ILEASGQKVP…LNKLLVELSV (75 aa)) is c.

It belongs to the heat shock protein 90 family. Homodimer.

Its subcellular location is the cytoplasm. In terms of biological role, molecular chaperone. Has ATPase activity. The polypeptide is Chaperone protein HtpG (Pseudomonas fluorescens (strain SBW25)).